Here is a 386-residue protein sequence, read N- to C-terminus: MSSIPANLPLRNDLIGEEPYGAPQLDVPVCLNVNENPYAPDPAVCDTIAKRVREIAPTLNRYPDREHIELRQAFSDYLARESGTRLDVDELWGANGSNEIMLQLFQAFGGPGRTALGADPTYSMYPEYARDTFTGWKLAHRNADFTLNVDKVLEAIAEVKPSMVLLTSPNNPTGTPLPMEDIERILAACETAEVVGAGEGVHPILVIDEAYVEFRKPGTPSAVSLIKDHPNLAVSRTMSKAFAFAGARVGYLAASKGIIDCVRIVRMPYHLSAVTQAAALAAFEHADEQLSRVEHLRETREATAAWLKEQTYKDQPLEVAESGSNFLLFGGHFDKREAIFDELLKRGVLIRVVGPDGWLRVCMGTDEEMETFRNALVEVLRIVEAA.

Lysine 240 is subject to N6-(pyridoxal phosphate)lysine.

Belongs to the class-II pyridoxal-phosphate-dependent aminotransferase family. Histidinol-phosphate aminotransferase subfamily. Homodimer. Requires pyridoxal 5'-phosphate as cofactor.

It carries out the reaction L-histidinol phosphate + 2-oxoglutarate = 3-(imidazol-4-yl)-2-oxopropyl phosphate + L-glutamate. It functions in the pathway amino-acid biosynthesis; L-histidine biosynthesis; L-histidine from 5-phospho-alpha-D-ribose 1-diphosphate: step 7/9. The protein is Histidinol-phosphate aminotransferase of Bifidobacterium longum (strain NCC 2705).